Here is a 462-residue protein sequence, read N- to C-terminus: Nuclear factor interleukin-3-regulated protein (462 aa).

Residue Lys-24 forms a Glycyl lysine isopeptide (Lys-Gly) (interchain with G-Cter in SUMO2) linkage. Residues Asp-73 to Gln-136 form the bZIP domain. The tract at residues Lys-79–Arg-95 is basic motif. The tract at residues Leu-99–Ile-106 is leucine-zipper. Disordered regions lie at residues Asp-189–Gly-237 and Ser-258–Pro-302. The span at Glu-201–Ser-210 shows a compositional bias: polar residues. Residue Lys-214 forms a Glycyl lysine isopeptide (Lys-Gly) (interchain with G-Cter in SUMO2) linkage. Residue Lys-219 forms a Glycyl lysine isopeptide (Lys-Gly) (interchain with G-Cter in SUMO1); alternate linkage. Lys-219 participates in a covalent cross-link: Glycyl lysine isopeptide (Lys-Gly) (interchain with G-Cter in SUMO2); alternate. Residues Ser-227 to Gly-237 show a composition bias toward basic and acidic residues. Positions Val-264–Thr-274 are enriched in polar residues. The interval Ile-299–Phe-363 is necessary for transcriptional repression and sufficient for interaction with DR1. The residue at position 301 (Ser-301) is a Phosphoserine. Glycyl lysine isopeptide (Lys-Gly) (interchain with G-Cter in SUMO2) cross-links involve residues Lys-306, Lys-314, Lys-326, Lys-332, Lys-337, and Lys-350. Residue Ser-353 is modified to Phosphoserine. Residues Lys-360, Lys-394, Lys-401, Lys-406, Lys-412, Lys-419, Lys-424, Lys-434, and Lys-448 each participate in a glycyl lysine isopeptide (Lys-Gly) (interchain with G-Cter in SUMO2) cross-link.

This sequence belongs to the bZIP family. NFIL3 subfamily. In terms of assembly, homodimer. Binds DNA as a dimer. Interacts with DR1. Interacts with PER2 and CRY2. Interacts with NR0B2. Interacts with MYSM1. In terms of tissue distribution, expressed in bladder stomach, thyroid, spinal cord, lymph node, trachea, adrenal gland, bone marrow and muscle.

It localises to the nucleus. Acts as a transcriptional regulator that recognizes and binds to the sequence 5'-[GA]TTA[CT]GTAA[CT]-3', a sequence present in many cellular and viral promoters. Represses transcription from promoters with activating transcription factor (ATF) sites. Represses promoter activity in osteoblasts. Represses transcriptional activity of PER1. Represses transcriptional activity of PER2 via the B-site on the promoter. Activates transcription from the interleukin-3 promoter in T-cells. Competes for the same consensus-binding site with PAR DNA-binding factors (DBP, HLF and TEF). Component of the circadian clock that acts as a negative regulator for the circadian expression of PER2 oscillation in the cell-autonomous core clock. Protects pro-B cells from programmed cell death. Represses the transcription of CYP2A5. Positively regulates the expression and activity of CES2 by antagonizing the repressive action of NR1D1 on CES2. Required for the development of natural killer cell precursors. In Homo sapiens (Human), this protein is Nuclear factor interleukin-3-regulated protein (NFIL3).